A 260-amino-acid chain; its full sequence is MKPKISFNNVVMRYGGFLALDRLNLDIADGEFVTVVGPSGCGKSTAMNIAAGLLQPSGGEILVGDKPVTGPGPERGVIFQQYALFPWLTVRQNVEFGLSVAGMSRVKRREISDHYLSLVGLTDFADALPKALSGGMKQRCAIARAYAAAPEILLMDEPFGALDALTRVHMQDQLLDAWSRERRTVMFITHDVDEAVYLANRVIVMAARPGRLDQIIPVDLPYPRTEAIRLSPEFAAIRNRVWHAVYHQQPQTDQQSSHGQ.

One can recognise an ABC transporter domain in the interval 5–228 (ISFNNVVMRY…DLPYPRTEAI (224 aa)). Residue 37 to 44 (GPSGCGKS) participates in ATP binding.

The protein belongs to the ABC transporter superfamily. As to quaternary structure, the complex is composed of two ATP-binding proteins (BAB2_1147), two transmembrane proteins (BAB2_1148) and a solute-binding protein (BAB2_1146).

The protein localises to the cell inner membrane. Functionally, probably part of an ABC transporter complex. Probably Responsible for energy coupling to the transport system. The chain is Putative ATP-binding protein BAB2_1147 from Brucella abortus (strain 2308).